The following is a 316-amino-acid chain: Beta-ketoacyl-[acyl-carrier-protein] synthase III 1 (316 aa).

Residues cysteine 112 and histidine 243 contribute to the active site. Residues 244-248 (QANYR) form an ACP-binding region. Asparagine 273 is a catalytic residue.

The protein belongs to the thiolase-like superfamily. FabH family. In terms of assembly, homodimer.

It localises to the cytoplasm. It catalyses the reaction malonyl-[ACP] + acetyl-CoA + H(+) = 3-oxobutanoyl-[ACP] + CO2 + CoA. The protein operates within lipid metabolism; fatty acid biosynthesis. Catalyzes the condensation reaction of fatty acid synthesis by the addition to an acyl acceptor of two carbons from malonyl-ACP. Catalyzes the first condensation reaction which initiates fatty acid synthesis and may therefore play a role in governing the total rate of fatty acid production. Possesses both acetoacetyl-ACP synthase and acetyl transacylase activities. Its substrate specificity determines the biosynthesis of branched-chain and/or straight-chain of fatty acids. The polypeptide is Beta-ketoacyl-[acyl-carrier-protein] synthase III 1 (Vibrio vulnificus (strain CMCP6)).